Here is a 152-residue protein sequence, read N- to C-terminus: Transcriptional regulator MraZ (152 aa).

SpoVT-AbrB domains are found at residues Ala-5–Ala-52 and Ala-81–Thr-124.

The protein belongs to the MraZ family. Forms oligomers.

The protein resides in the cytoplasm. It localises to the nucleoid. Functionally, negatively regulates its own expression and that of the subsequent genes in the proximal part of the division and cell wall (dcw) gene cluster. Acts by binding directly to DNA. May also regulate the expression of genes outside the dcw cluster. The protein is Transcriptional regulator MraZ of Yersinia enterocolitica serotype O:8 / biotype 1B (strain NCTC 13174 / 8081).